Reading from the N-terminus, the 165-residue chain is Transcription antitermination protein NusB (165 aa).

It belongs to the NusB family.

In terms of biological role, involved in transcription antitermination. Required for transcription of ribosomal RNA (rRNA) genes. Binds specifically to the boxA antiterminator sequence of the ribosomal RNA (rrn) operons. This Chlorobium phaeobacteroides (strain DSM 266 / SMG 266 / 2430) protein is Transcription antitermination protein NusB.